The chain runs to 365 residues: Protein-glutamate methylesterase/protein-glutamine glutaminase 2 (365 aa).

Positions arginine 6–arginine 123 constitute a Response regulatory domain. Aspartate 57 bears the 4-aspartylphosphate mark. The CheB-type methylesterase domain occupies alanine 173–leucine 359. Catalysis depends on residues serine 185, histidine 211, and aspartate 307.

Belongs to the CheB family. Phosphorylated by CheA. Phosphorylation of the N-terminal regulatory domain activates the methylesterase activity.

The protein resides in the cytoplasm. It catalyses the reaction [protein]-L-glutamate 5-O-methyl ester + H2O = L-glutamyl-[protein] + methanol + H(+). The enzyme catalyses L-glutaminyl-[protein] + H2O = L-glutamyl-[protein] + NH4(+). Involved in chemotaxis. Part of a chemotaxis signal transduction system that modulates chemotaxis in response to various stimuli. Catalyzes the demethylation of specific methylglutamate residues introduced into the chemoreceptors (methyl-accepting chemotaxis proteins or MCP) by CheR. Also mediates the irreversible deamidation of specific glutamine residues to glutamic acid. The polypeptide is Protein-glutamate methylesterase/protein-glutamine glutaminase 2 (Rhizobium johnstonii (strain DSM 114642 / LMG 32736 / 3841) (Rhizobium leguminosarum bv. viciae)).